The primary structure comprises 1373 residues: TAL effector protein PthXo1 (1373 aa).

2 disordered regions span residues methionine 1 to serine 68 and alanine 127 to glutamine 152. A compositionally biased stretch (basic residues) spans proline 131–alanine 141. A compositionally biased stretch (low complexity) spans alanine 142–glutamine 152. The stretch at threonine 221–glutamate 239 is one Cryptic repeat -1 repeat. The stretch at aspartate 256–glutamate 273 is one Cryptic repeat 0 repeat. Core repeat repeat units follow at residues leucine 289 to glycine 322, leucine 323 to glycine 356, leucine 357 to glycine 390, leucine 391 to glycine 424, leucine 425 to glycine 458, leucine 459 to glycine 492, leucine 493 to glycine 525, leucine 526 to glycine 559, leucine 560 to glycine 593, leucine 594 to glycine 627, leucine 628 to glycine 661, leucine 662 to glycine 695, leucine 696 to glycine 729, leucine 730 to glycine 763, leucine 764 to glycine 797, leucine 798 to glycine 831, leucine 832 to glycine 865, leucine 866 to glycine 899, leucine 900 to glycine 933, leucine 934 to glycine 967, leucine 968 to glycine 1001, leucine 1002 to glycine 1034, and leucine 1035 to glycine 1068. HEAT repeat units lie at residues leucine 714–glutamine 760, leucine 782–glutamine 828, leucine 850–valine 893, and leucine 918–valine 961. One copy of the HEAT 5 repeat lies at leucine 1053–alanine 1091. The Core repeat 23.5 repeat unit spans residues leucine 1069–glutamate 1087. An acidic activation domain region spans residues arginine 1136–proline 1364. Residues lysine 1222–lysine 1225 carry the Nuclear localization signal NLS1 motif. The tract at residues leucine 1250–glutamate 1286 is disordered. Positions lysine 1268–arginine 1271 match the Nuclear localization signal NLS2 motif. Residues lysine 1305–arginine 1308 carry the Nuclear localization signal NLS3 motif.

It belongs to the transcription activator-like effector (TALE) family.

It is found in the secreted. The protein localises to the host nucleus. Its function is as follows. Avirulence protein. Acts as a transcription factor in rice, inducing expression of a number of host genes including SWEET11 (Os8N3, XA13, AC Q6YZF3) in susceptible plants with the Xa13 allele. Plants with the xa13 allele, which has an altered promoter, are resistant to bacterial blight caused by this bacterial strain and do not induce SWEET11. The xa13 allele elicits an atypical hypersensitive response (HR). PthXo1 binds SWEET11 promoter DNA in a sequence-specific manner. This chain is TAL effector protein PthXo1 (pthXo1), found in Xanthomonas oryzae pv. oryzae (strain PXO99A).